Consider the following 275-residue polypeptide: Mitochondrial prohibitin complex protein 1 (275 aa).

Residues 180–213 adopt a coiled-coil conformation; the sequence is REFTEAVEMKQVAQQEAEKARYLVEKAEQMKIAA.

Belongs to the prohibitin family. High molecular weight complex that consist of phb-1 and phb-2.

The protein resides in the mitochondrion inner membrane. Functionally, PHB proteins are essential during embryonic development and are required for somatic and germline differentiation in the larval gonad. A deficiency in PHB proteins results in altered mitochondrial biogenesis in body wall muscle cells. This is Mitochondrial prohibitin complex protein 1 (phb-1) from Caenorhabditis elegans.